Consider the following 154-residue polypeptide: Large ribosomal subunit protein uL23 (154 aa).

The tract at residues 1 to 39 (MAPAKADPSKKSDPKAQAAKVAKAVKSGSTLKKKSQKIR) is disordered. The segment covering 15–26 (KAQAAKVAKAVK) has biased composition (low complexity).

This sequence belongs to the universal ribosomal protein uL23 family.

Its function is as follows. This protein binds to a specific region on the 26S rRNA. The protein is Large ribosomal subunit protein uL23 (RPL23A) of Nicotiana tabacum (Common tobacco).